The chain runs to 1243 residues: MGDMTNSDFYSKNQRNESSHGGEFGCSMEELRSLMELRGTEAVVKIKETYGDTESICRRLKTSPVEGLPGTAPDLEKRKQIFGQNFIPPKKPKTFLQLVWEALQDVTLIILEIAAIISLGLSFYHPPGESNEGCATAQGGAEDEGEAEAGWIEGAAILLSVICVVLVTAFNDWSKEKQFRGLQSRIEQEQKFTVVRAGQVVQIPVAEIVVGDIAQIKYGDLLPADGLFIQGNDLKIDESSLTGESDQVRKSVDKDPMLLSGTHVMEGSGRMVVTAVGVNSQTGIIFTLLGAGGEEEEKKDKKGVKKGDGLQLPAADGAAPANAAGSANASLVNGKMQDGSADSSQSKAKQQDGAAAMEMQPLKSAEGGDADDKKKANMHKKEKSVLQGKLTKLAVQIGKAGLVMSAITVIILVLYFTVDTFVVNKKPWLTECTPVYVQYFVKFFIIGVTVLVVAVPEGLPLAVTISLAYSVKKMMKDNNLVRHLDACETMGNATAICSDKTGTLTTNRMTVVQAYVGDVHYKEIPDPSSINAKTLELLVNAIAINSAYTTKILPPEKEGALPRQVGNKTECGLLGFVLDLRQDYEPVRSQMPEEKLYKVYTFNSVRKSMSTVIKMPDESFRMYSKGASEIVLKKCCKILSGAGEPRVFRPRDRDEMVKKVIEPMACDGLRTICVAYRDFPSSPEPDWDNENDILNELTCICVVGIEDPVRPEVPEAIRKCQRAGITVRMVTGDNINTARAIAIKCGIIHPGEDFLCLEGKEFNRRIRNEKGEIEQERIDKIWPKLRVLARSSPTDKHTLVKGIIDSTHTEQRQVVAVTGDGTNDGPALKKADVGFAMGIAGTDVAKEASDIILTDDNFSSIVKAVMWGRNVYDSISKFLQFQLTVNVVAVIVAFTGACITQDSPLKAVQMLWVNLIMDTFASLALATEPPTETLLLRKPYGRNKPLISRTMMKNILGHAVYQLTLIFTLLFVGEKMFQIDSGRNAPLHSPPSEHYTIIFNTFVMMQLFNEINARKIHGERNVFDGIFRNPIFCTIVLGTFAIQIVIVQFGGKPFSCSPLQLDQWMWCIFIGLGELVWGQVIATIPTSRLKFLKEAGRLTQKEEIPEEELNEDVEEIDHAERELRRGQILWFRGLNRIQTQIRVVKAFRSSLYEGLEKPESRTSIHNFMAHPEFRIEDSQPHIPLIDDTDLEEDAALKQNSSPPSSLNKNNSAIDSGINLTTDTSKSATSSSPGSPIHSLETSL.

The segment covering 1–13 (MGDMTNSDFYSKN) has biased composition (polar residues). The interval 1–24 (MGDMTNSDFYSKNQRNESSHGGEF) is disordered. Topologically, residues 1–94 (MGDMTNSDFY…NFIPPKKPKT (94 aa)) are cytoplasmic. Residues Ser18 and Ser27 each carry the phosphoserine modification. A helical membrane pass occupies residues 95-115 (FLQLVWEALQDVTLIILEIAA). At 116–152 (IISLGLSFYHPPGESNEGCATAQGGAEDEGEAEAGWI) the chain is on the extracellular side. Residues 153–173 (EGAAILLSVICVVLVTAFNDW) form a helical membrane-spanning segment. At 174–390 (SKEKQFRGLQ…KEKSVLQGKL (217 aa)) the chain is on the cytoplasmic side. Basic and acidic residues predominate over residues 296-308 (EEKKDKKGVKKGD). The segment at 296–382 (EEKKDKKGVK…KKKANMHKKE (87 aa)) is disordered. Composition is skewed to low complexity over residues 313-330 (PAADGAAPANAAGSANAS) and 337-356 (QDGSADSSQSKAKQQDGAAA). Residues 391–410 (TKLAVQIGKAGLVMSAITVI) form a helical membrane-spanning segment. The Extracellular portion of the chain corresponds to 411 to 443 (ILVLYFTVDTFVVNKKPWLTECTPVYVQYFVKF). A helical membrane pass occupies residues 444 to 461 (FIIGVTVLVVAVPEGLPL). The Cytoplasmic portion of the chain corresponds to 462–875 (AVTISLAYSV…MWGRNVYDSI (414 aa)). Asp499 acts as the 4-aspartylphosphate intermediate in catalysis. The Mg(2+) site is built by Asp820 and Asp824. A helical transmembrane segment spans residues 876 to 895 (SKFLQFQLTVNVVAVIVAFT). Residues 896-905 (GACITQDSPL) lie on the Extracellular side of the membrane. Residues 906–926 (KAVQMLWVNLIMDTFASLALA) form a helical membrane-spanning segment. Residues 927–946 (TEPPTETLLLRKPYGRNKPL) are Cytoplasmic-facing. The helical transmembrane segment at 947–969 (ISRTMMKNILGHAVYQLTLIFTL) threads the bilayer. Residues 970–987 (LFVGEKMFQIDSGRNAPL) are Extracellular-facing. Residues 988 to 1009 (HSPPSEHYTIIFNTFVMMQLFN) traverse the membrane as a helical segment. At 1010 to 1028 (EINARKIHGERNVFDGIFR) the chain is on the cytoplasmic side. A helical transmembrane segment spans residues 1029–1050 (NPIFCTIVLGTFAIQIVIVQFG). The Extracellular portion of the chain corresponds to 1051–1060 (GKPFSCSPLQ). A helical transmembrane segment spans residues 1061-1082 (LDQWMWCIFIGLGELVWGQVIA). Residues 1083-1243 (TIPTSRLKFL…SPIHSLETSL (161 aa)) are Cytoplasmic-facing. Phosphoserine is present on residues Glu1107, Ile1116, Asp1117, Arg1121, Trp1130, Phe1131, and Gln1138. The interval 1123–1140 (LRRGQILWFRGLNRIQTQ) is calmodulin-binding subdomain A. Position 1139 is a phosphothreonine; by PKC (Thr1139). The segment at 1141-1150 (IRVVKAFRSS) is calmodulin-binding subdomain B. Residues Val1144, Phe1147, Arg1148, Tyr1152, Arg1161, Thr1162, Ile1175, and Ser1178 each carry the phosphoserine modification. Residue Thr1188 is modified to Phosphothreonine. The interval 1194-1243 (AALKQNSSPPSSLNKNNSAIDSGINLTTDTSKSATSSSPGSPIHSLETSL) is disordered. Composition is skewed to low complexity over residues 1196–1211 (LKQNSSPPSSLNKNNS) and 1220–1234 (TTDTSKSATSSSPGS). Ser1201 carries the post-translational modification Phosphoserine; by PKA. Ser1211 bears the Phosphoserine mark.

Belongs to the cation transport ATPase (P-type) (TC 3.A.3) family. Type IIB subfamily. In terms of assembly, interacts with PDZD11. As to expression, isoforms containing segment B are found in brain, uterus, liver and kidney and in low levels in other tissues. Isoforms containing segment W are found in kidney, uterus, and pancreas. Isoforms containing segment Y are found in pancreas and in low levels in brain and heart. Isoforms containing segment Z are found in brain and heart and isoforms containing segment X are found in low levels in brain. Isoforms containing segment A are found in low levels in heart and small intestine while isoforms containing segment C are found in testis and in low levels in other tissues.

The protein localises to the cell membrane. Its subcellular location is the synapse. It is found in the apical cell membrane. The protein resides in the basolateral cell membrane. The catalysed reaction is Ca(2+)(in) + ATP + H2O = Ca(2+)(out) + ADP + phosphate + H(+). In terms of biological role, ATP-driven Ca(2+) ion pump involved in the maintenance of basal intracellular Ca(2+) levels in specialized cells of cerebellar circuit and vestibular and cochlear systems. Uses ATP as an energy source to transport cytosolic Ca(2+) ions across the plasma membrane to the extracellular compartment. Has fast activation and Ca(2+) clearance rate suited to control fast neuronal Ca(2+) dynamics. At parallel fiber to Purkinje neuron synapse, mediates presynaptic Ca(2+) efflux in response to climbing fiber-induced Ca(2+) rise. Provides for fast return of Ca(2+) concentrations back to their resting levels, ultimately contributing to long-term depression induction and motor learning. Plays an essential role in hearing and balance. In cochlear hair cells, shuttles Ca(2+) ions from stereocilia to the endolymph and dissipates Ca(2+) transients generated by the opening of the mechanoelectrical transduction channels. Regulates Ca(2+) levels in the vestibular system, where it contributes to the formation of otoconia. In non-excitable cells, regulates Ca(2+) signaling through spatial control of Ca(2+) ions extrusion and dissipation of Ca(2+) transients generated by store-operated channels. In lactating mammary gland, allows for the high content of Ca(2+) ions in the milk. The sequence is that of Plasma membrane calcium-transporting ATPase 2 (Atp2b2) from Rattus norvegicus (Rat).